Here is a 419-residue protein sequence, read N- to C-terminus: Glutamyl-tRNA reductase (419 aa).

Substrate-binding positions include 49–52, S107, 112–114, and Q118; these read TCNR and EPQ. C50 acts as the Nucleophile in catalysis. 187–192 is an NADP(+) binding site; sequence GAGETI.

The protein belongs to the glutamyl-tRNA reductase family. Homodimer.

It catalyses the reaction (S)-4-amino-5-oxopentanoate + tRNA(Glu) + NADP(+) = L-glutamyl-tRNA(Glu) + NADPH + H(+). It participates in porphyrin-containing compound metabolism; protoporphyrin-IX biosynthesis; 5-aminolevulinate from L-glutamyl-tRNA(Glu): step 1/2. In terms of biological role, catalyzes the NADPH-dependent reduction of glutamyl-tRNA(Glu) to glutamate 1-semialdehyde (GSA). The chain is Glutamyl-tRNA reductase from Vibrio vulnificus (strain CMCP6).